A 190-amino-acid chain; its full sequence is MASRGKTETSKLKQNLEEQLDRLMQQLQDLEECREELDTDEYEETKKETLEQLSEFNDSLKKIMSGNMTLVDELSGMQLAIQAAISQAFKTPEVIRLFAKKQPGQLRTRLAEMDRDLMVGKLERDLYTQQKVEILTALRKLGEKLTADDEAFLSANAGAILSQFEKVSTDLGSGDKILALASFEVEKTKK.

The stretch at 2–63 forms a coiled coil; it reads ASRGKTETSK…SEFNDSLKKI (62 aa).

This sequence belongs to the CTNNBIP1 family. Does not interact with CTNNB1. In terms of tissue distribution, ubiquitously expressed, with highest levels in kidney. Up-regulated in several cases of gastric cancers.

This chain is Protein LZIC (LZIC), found in Homo sapiens (Human).